The chain runs to 98 residues: MMMAVLNISLAFIFSLLGTLMFRSHLMSTLLCLEGMMLTLFIITTITSLNSHSMVMYPIPIVILVFAACEAAVGLALLVKVSNTYGSDYVQNLNLLQC.

3 helical membrane-spanning segments follow: residues 2-22, 26-46, and 59-79; these read MMAV…TLMF, LMST…ITTI, and IPIV…ALLV.

This sequence belongs to the complex I subunit 4L family. As to quaternary structure, core subunit of respiratory chain NADH dehydrogenase (Complex I) which is composed of 45 different subunits.

Its subcellular location is the mitochondrion inner membrane. It carries out the reaction a ubiquinone + NADH + 5 H(+)(in) = a ubiquinol + NAD(+) + 4 H(+)(out). Core subunit of the mitochondrial membrane respiratory chain NADH dehydrogenase (Complex I) which catalyzes electron transfer from NADH through the respiratory chain, using ubiquinone as an electron acceptor. Part of the enzyme membrane arm which is embedded in the lipid bilayer and involved in proton translocation. The polypeptide is NADH-ubiquinone oxidoreductase chain 4L (MT-ND4L) (Phodopus sungorus (Striped hairy-footed hamster)).